The primary structure comprises 49 residues: Large ribosomal subunit protein bL33 (49 aa).

The protein belongs to the bacterial ribosomal protein bL33 family.

The protein is Large ribosomal subunit protein bL33 of Desulforudis audaxviator (strain MP104C).